Consider the following 119-residue polypeptide: Beta-2-microglobulin (119 aa).

The signal sequence occupies residues 1-20 (MARFVVVPLLVLVSLFGLEA). Residues 25-114 (PKIQVYSRYP…VTFSTPKTVK (90 aa)) form the Ig-like C1-type domain. A disulfide bridge links Cys45 with Cys100.

Belongs to the beta-2-microglobulin family. Heterodimer of an alpha chain and a beta chain. Beta-2-microglobulin is the beta-chain of major histocompatibility complex class I molecules.

It localises to the secreted. Component of the class I major histocompatibility complex (MHC). Involved in the presentation of peptide antigens to the immune system. In Saguinus oedipus (Cotton-top tamarin), this protein is Beta-2-microglobulin (B2M).